The following is a 113-amino-acid chain: Iron-sulfur cluster insertion protein ErpA (113 aa).

3 residues coordinate iron-sulfur cluster: Cys41, Cys105, and Cys107.

This sequence belongs to the HesB/IscA family. In terms of assembly, homodimer. Iron-sulfur cluster is required as a cofactor.

Functionally, required for insertion of 4Fe-4S clusters for at least IspG. In Photobacterium profundum (strain SS9), this protein is Iron-sulfur cluster insertion protein ErpA.